Reading from the N-terminus, the 826-residue chain is Zinc phosphodiesterase ELAC protein 2 (826 aa).

A mitochondrion-targeting transit peptide spans 1–16 (MWALCSLLRSAAGRTM). 2 disordered regions span residues 16–51 (MSQG…PSGC) and 188–231 (EQRR…VSQR). Positions 27–38 (ARRERPRKDPLR) are enriched in basic and acidic residues. A phosphoserine mark is found at S199, S208, S212, S229, S618, and S736. Positions 208–224 (SPERSSDSESNENEPHL) are enriched in basic and acidic residues. The disordered stretch occupies residues 798–826 (ELAGGLEDGEPQQKRAHTEEPQAKKVRAQ). Over residues 808-820 (PQQKRAHTEEPQA) the composition is skewed to basic and acidic residues.

Belongs to the RNase Z family. As to quaternary structure, homodimer. Interacts with PTCD1. The cofactor is Zn(2+).

Its subcellular location is the mitochondrion. The protein resides in the mitochondrion matrix. It localises to the mitochondrion nucleoid. It is found in the nucleus. The catalysed reaction is Endonucleolytic cleavage of RNA, removing extra 3' nucleotides from tRNA precursor, generating 3' termini of tRNAs. A 3'-hydroxy group is left at the tRNA terminus and a 5'-phosphoryl group is left at the trailer molecule.. Its function is as follows. Zinc phosphodiesterase, which displays mitochondrial tRNA 3'-processing endonuclease activity. Involved in tRNA maturation, by removing a 3'-trailer from precursor tRNA. Associates with mitochondrial DNA complexes at the nucleoids to initiate RNA processing and ribosome assembly. In Pan troglodytes (Chimpanzee), this protein is Zinc phosphodiesterase ELAC protein 2 (ELAC2).